A 561-amino-acid polypeptide reads, in one-letter code: Formate--tetrahydrofolate ligase (561 aa).

66–73 (TPAGEGKT) contacts ATP.

The protein belongs to the formate--tetrahydrofolate ligase family.

It carries out the reaction (6S)-5,6,7,8-tetrahydrofolate + formate + ATP = (6R)-10-formyltetrahydrofolate + ADP + phosphate. The protein operates within one-carbon metabolism; tetrahydrofolate interconversion. This Methylibium petroleiphilum (strain ATCC BAA-1232 / LMG 22953 / PM1) protein is Formate--tetrahydrofolate ligase.